The primary structure comprises 530 residues: PC4 and SFRS1-interacting protein (530 aa).

Positions 1–64 (MTRDFKPGDL…PKDIFPYSEN (64 aa)) constitute a PWWP domain. A Glycyl lysine isopeptide (Lys-Gly) (interchain with G-Cter in SUMO2) cross-link involves residue lysine 75. Positions 88 to 349 (PKVKFSSQQA…VEKKRETSMD (262 aa)) are disordered. The segment covering 92–104 (FSSQQAATKQSNA) has biased composition (polar residues). A phosphoserine mark is found at serine 102, serine 105, and serine 106. Basic and acidic residues predominate over residues 113–135 (KETSVSKEDTDHEEKASNEDVTK). Residues threonine 115 and threonine 122 each carry the phosphothreonine modification. Serine 129 bears the Phosphoserine mark. Residue threonine 141 is modified to Phosphothreonine. Residues 144 to 153 (AARRGRKRKA) show a composition bias toward basic residues. The short motif at 146–156 (RRGRKRKAEKQ) is the Nuclear localization signal element. Threonine 167 bears the Phosphothreonine mark. Residues serine 177 and serine 206 each carry the phosphoserine modification. A compositionally biased stretch (basic and acidic residues) spans 213-261 (EEDKSKKKGQEEKQPKKQPKKDEEGQKEEDKPRKEPDKKEGKKEVESKR). Phosphoserine is present on serine 271. At threonine 272 the chain carries Phosphothreonine. A phosphoserine mark is found at serine 273 and serine 275. Residues 274 to 283 (DSEEEGDDQE) are compositionally biased toward acidic residues. Basic residues predominate over residues 287 to 302 (KRKGGRNFQTAHRRNM). A compositionally biased stretch (basic and acidic residues) spans 305 to 349 (GQHEKEAADRKRKQEEQMETEQQNKDEGKKPEVKKVEKKRETSMD). Coiled-coil stretches lie at residues 306–334 (QHEK…EGKK) and 371–395 (NRCI…KHTE). Positions 340–417 (VEKKRETSMD…VSQVIMEKST (78 aa)) are integrase-binding domain (IBD). Phosphoserine is present on serine 434. Threonine 437 carries the phosphothreonine modification. Serine 443 carries the post-translational modification Phosphoserine. Positions 446–473 (EQRQHEEANKTKDQGKKGPNKKLEKEQT) are enriched in basic and acidic residues. The interval 446 to 530 (EQRQHEEANK…ISLKDSTLDN (85 aa)) is disordered. A compositionally biased stretch (polar residues) spans 474–494 (GSKTLNGGSDAQDGNQPQHNG). Residues 498 to 530 (EDSKDNHEASTKKKPSSEERETEISLKDSTLDN) show a composition bias toward basic and acidic residues. Phosphoserine is present on serine 514. Arginine 517 is subject to Citrulline. The residue at position 522 (serine 522) is a Phosphoserine. Position 527 is a phosphothreonine (threonine 527).

It belongs to the HDGF family. In terms of assembly, monomer. Interacts with IFRD1/PC4. Isoform 2 interacts with SFRS1. Isoform 1 interacts (via IBD domain) with POGZ (via IBM motif) and CDCA7L (via IBM motifs). Interacts (via IBD domain) with KMT2A (via IBM motifs) with a moderate affinity whereas interacts with the KMT2A-MEN1 complex with a greater affinity; MEN1 enhances interaction of KMT2A with PSIP1. Interacts with fusion protein KMT2A-MLLT3. Interacts (via IBD domain) with IWS1 (via IBM motif), MED1 (via IBM motif) and DBF4 (via IBM motifs). As to quaternary structure, (Microbial infection) Interacts (via IBD domain) with human HIV-1 integrase protein (HIV-1 IN), determining its nuclear localization, its tight association with chromatin and its protection from the proteasome. (Microbial infection) Interacts with HIV-2 IN. Post-translationally, citrullinated by PADI4. In terms of tissue distribution, widely expressed. Expressed at high level in the thymus. Expressed in fetal and adult brain. Expressed in neurons, but not astrocytes. Markedly elevated in fetal as compared to adult brain. In the adult brain, expressed in the subventricular zone (SVZ), in hippocampus, and undetectable elsewhere. In the fetal brain, expressed in the germinal neuroepithelium and cortical plate regions.

The protein resides in the nucleus. Functionally, transcriptional coactivator involved in neuroepithelial stem cell differentiation and neurogenesis. Involved in particular in lens epithelial cell gene regulation and stress responses. May play an important role in lens epithelial to fiber cell terminal differentiation. May play a protective role during stress-induced apoptosis. Isoform 2 is a more general and stronger transcriptional coactivator. Isoform 2 may also act as an adapter to coordinate pre-mRNA splicing. Cellular cofactor for lentiviral integration. This chain is PC4 and SFRS1-interacting protein (PSIP1), found in Homo sapiens (Human).